A 144-amino-acid polypeptide reads, in one-letter code: Superoxide dismutase [Mn], mitochondrial (144 aa).

Residues histidine 10, histidine 58, and aspartate 143 each contribute to the Mn(2+) site.

The protein belongs to the iron/manganese superoxide dismutase family. Homotetramer. Requires Mn(2+) as cofactor.

The protein localises to the mitochondrion matrix. The catalysed reaction is 2 superoxide + 2 H(+) = H2O2 + O2. Destroys superoxide anion radicals which are normally produced within the cells and which are toxic to biological systems. The sequence is that of Superoxide dismutase [Mn], mitochondrial from Petromyzon marinus (Sea lamprey).